We begin with the raw amino-acid sequence, 281 residues long: MEANTRSTGRLPAAFLTPGSSSFMDFLSDQSPEMLPGNRSLPPLQGAVEAPHGTTIVSASFPGGVVLAGDRRATMGNMIASRDMQKVFPADEYSAVGIAGTAGLAVEMVKLFQLELEHFEKVEGAQLSLEGKANRLSTMIRSNLAMAMQGLAVVPLFAGYDVDREKGRIFSYDVTGGRTEESGYAATGSGSIFARNAMKKLYREDLTEEQALTLVVQALYDAADDDSATGGPDVARRIFPIVTVITDEGFRRLTDQESSEIARSILERRLEQPDGPRAALL.

The propeptide at 1 to 53 (MEANTRSTGRLPAAFLTPGSSSFMDFLSDQSPEMLPGNRSLPPLQGAVEAPHG) is removed in mature form; by autocatalysis. The active-site Nucleophile is the T54.

Belongs to the peptidase T1B family. In terms of assembly, the 20S proteasome core is composed of 14 alpha and 14 beta subunits that assemble into four stacked heptameric rings, resulting in a barrel-shaped structure. The two inner rings, each composed of seven catalytic beta subunits, are sandwiched by two outer rings, each composed of seven alpha subunits. The catalytic chamber with the active sites is on the inside of the barrel. Has a gated structure, the ends of the cylinder being occluded by the N-termini of the alpha-subunits. Is capped by the proteasome-associated ATPase, ARC.

It localises to the cytoplasm. The enzyme catalyses Cleavage of peptide bonds with very broad specificity.. The protein operates within protein degradation; proteasomal Pup-dependent pathway. With respect to regulation, the formation of the proteasomal ATPase ARC-20S proteasome complex, likely via the docking of the C-termini of ARC into the intersubunit pockets in the alpha-rings, may trigger opening of the gate for substrate entry. Interconversion between the open-gate and close-gate conformations leads to a dynamic regulation of the 20S proteasome proteolysis activity. Its function is as follows. Component of the proteasome core, a large protease complex with broad specificity involved in protein degradation. This is Proteasome subunit beta from Streptomyces griseus subsp. griseus (strain JCM 4626 / CBS 651.72 / NBRC 13350 / KCC S-0626 / ISP 5235).